Reading from the N-terminus, the 689-residue chain is Glycine--tRNA ligase beta subunit (689 aa).

The protein belongs to the class-II aminoacyl-tRNA synthetase family. As to quaternary structure, tetramer of two alpha and two beta subunits.

The protein resides in the cytoplasm. It carries out the reaction tRNA(Gly) + glycine + ATP = glycyl-tRNA(Gly) + AMP + diphosphate. The chain is Glycine--tRNA ligase beta subunit from Shewanella pealeana (strain ATCC 700345 / ANG-SQ1).